A 108-amino-acid polypeptide reads, in one-letter code: FK506-binding protein 1 (108 aa).

The PPIase FKBP-type domain maps to 20 to 108; it reads GDAVTIHYVG…VFDVELLGIN (89 aa).

It belongs to the FKBP-type PPIase family. FKBP1 subfamily.

The protein localises to the cytoplasm. The enzyme catalyses [protein]-peptidylproline (omega=180) = [protein]-peptidylproline (omega=0). Inhibited by both FK506 and rapamycin. PPIases accelerate the folding of proteins. It catalyzes the cis-trans isomerization of proline imidic peptide bonds in oligopeptides. This chain is FK506-binding protein 1 (FPR1), found in Yarrowia lipolytica (strain CLIB 122 / E 150) (Yeast).